We begin with the raw amino-acid sequence, 359 residues long: Alanine racemase (359 aa).

The active-site Proton acceptor; specific for D-alanine is the Lys35. Lys35 carries the N6-(pyridoxal phosphate)lysine modification. Position 131 (Arg131) interacts with substrate. Catalysis depends on Tyr253, which acts as the Proton acceptor; specific for L-alanine. Met301 contributes to the substrate binding site.

The protein belongs to the alanine racemase family. Pyridoxal 5'-phosphate serves as cofactor.

The enzyme catalyses L-alanine = D-alanine. It functions in the pathway amino-acid biosynthesis; D-alanine biosynthesis; D-alanine from L-alanine: step 1/1. Catalyzes the interconversion of L-alanine and D-alanine. May also act on other amino acids. The sequence is that of Alanine racemase (alr) from Laribacter hongkongensis (strain HLHK9).